The primary structure comprises 562 residues: MFS-type efflux pump elcC (562 aa).

11 helical membrane passes run 50–70 (WVFLIALALFEIGSLICGAAP), 80–100 (VVAGIGSGGLFAGAILLVAEF), 111–131 (GMLGAMYSVASVAGPLMGGAF), 139–159 (LCFYINLPLGVVTAVIVFLLV), 184–204 (LYGLVVLVPTIICILLATQWG), 215–235 (IIALFVVGFVLFVAFVVIEIW), 257–277 (IFSFCLFGSFLVVAYFLPLWF), 288–308 (SGIHNLPSILGTTIFSVAAGG), 309–329 (MVFGLGYYTWACILGSVLAAV), 351–371 (VLYGAGCGFGLNQPLIAIQAA), and 383–403 (VVIFMQTFGGTIAIAVAQNVF). Asn448 carries an N-linked (GlcNAc...) asparagine glycan. The helical transmembrane segment at 455-475 (FYVAVATAGLSMAGSILIPWL) threads the bilayer. The tract at residues 515–562 (EIASEDSQSSDIEKVPRNNEVSTYDSQTSEVEKSSVGSTNRKVESIRN) is disordered. Positions 533–554 (NEVSTYDSQTSEVEKSSVGSTN) are enriched in polar residues.

The protein belongs to the major facilitator superfamily. TCR/Tet family.

The protein localises to the cell membrane. Its function is as follows. MFS-type efflux pump; part of the gene cluster that mediates the biosynthesis of elsinochrome C, a perelyenequinone phytotoxin structurally similar to cercosporin. The sequence is that of MFS-type efflux pump elcC from Phaeosphaeria nodorum (strain SN15 / ATCC MYA-4574 / FGSC 10173) (Glume blotch fungus).